We begin with the raw amino-acid sequence, 384 residues long: S-adenosylmethionine synthase (384 aa).

H15 lines the ATP pocket. D17 contributes to the Mg(2+) binding site. A K(+)-binding site is contributed by E43. L-methionine is bound by residues E56 and Q99. The tract at residues 99 to 109 (QSPDINQGVDR) is flexible loop. Residues 164–166 (DAK), 230–231 (RF), D239, 245–246 (RK), A262, and K266 contribute to the ATP site. D239 contributes to the L-methionine binding site. K270 provides a ligand contact to L-methionine.

The protein belongs to the AdoMet synthase family. Homotetramer; dimer of dimers. Mg(2+) serves as cofactor. It depends on K(+) as a cofactor.

It localises to the cytoplasm. The enzyme catalyses L-methionine + ATP + H2O = S-adenosyl-L-methionine + phosphate + diphosphate. The protein operates within amino-acid biosynthesis; S-adenosyl-L-methionine biosynthesis; S-adenosyl-L-methionine from L-methionine: step 1/1. Functionally, catalyzes the formation of S-adenosylmethionine (AdoMet) from methionine and ATP. The overall synthetic reaction is composed of two sequential steps, AdoMet formation and the subsequent tripolyphosphate hydrolysis which occurs prior to release of AdoMet from the enzyme. The polypeptide is S-adenosylmethionine synthase (Salmonella heidelberg (strain SL476)).